The sequence spans 1581 residues: ATP-binding cassette sub-family C member 8 (1581 aa).

At 1–30 the chain is on the extracellular side; the sequence is MPLAFCGSENHSAAYRVDQGVLNNGCFVDA. A disulfide bridge connects residues cysteine 6 and cysteine 26. An N-linked (GlcNAc...) asparagine glycan is attached at asparagine 10. Residues 31-47 form a helical membrane-spanning segment; it reads LNVVPHVFLLFITFPIL. Residues 48–72 lie on the Cytoplasmic side of the membrane; it reads FIGWGSQSSKVHIHHSTWLHFPGHN. A helical membrane pass occupies residues 73 to 89; the sequence is LRWILTFMLLFVLVCEI. Over 90-106 the chain is Extracellular; it reads AEGILSDGVTESHHLHL. A helical transmembrane segment spans residues 107-123; that stretch reads YMPAGMAFMAAVTSVVY. Over 124 to 136 the chain is Cytoplasmic; that stretch reads YHNIETSNFPKLL. A helical transmembrane segment spans residues 137–153; that stretch reads IALLVYWTLAFITKTIK. The Extracellular segment spans residues 154–169; sequence FVKFLDHAIGFSQLRF. The chain crosses the membrane as a helical span at residues 170 to 186; the sequence is CLTGLLVILYGMLLLVE. The Cytoplasmic portion of the chain corresponds to 187-303; sequence VNVIRVRRYI…AFGRRLVLSS (117 aa). The region spanning 299–602 is the ABC transmembrane type-1 1 domain; the sequence is LVLSSTFRIL…LSSVVRSTVK (304 aa). The chain crosses the membrane as a helical span at residues 304-319; that stretch reads TFRILADLLGFAGPLC. Residues 320 to 356 are Extracellular-facing; the sequence is IFGIVDHLGKENDVFQPKTQFLGVYFVSSQEFLANAY. The helical transmembrane segment at 357–372 threads the bilayer; that stretch reads VLAVLLFLALLLQRTF. Over 373 to 438 the chain is Cytoplasmic; it reads LQASYYVAIE…MWFFFLCPNL (66 aa). The chain crosses the membrane as a helical span at residues 439 to 454; the sequence is WAMPVQIIVGVILLYY. The Extracellular portion of the chain corresponds to 455–460; sequence ILGVSA. Residues 461 to 473 traverse the membrane as a helical segment; sequence LIGAAVIILLAPV. Residues 474 to 541 are Cytoplasmic-facing; that stretch reads QYFVATKLSQ…SLRAFAIYTS (68 aa). Residues 542–557 traverse the membrane as a helical segment; it reads ISIFMNTAIPIAAVLI. Over 558 to 576 the chain is Extracellular; it reads TFVGHVSFFKEADFSPSVA. A helical transmembrane segment spans residues 577–592; sequence FASLSLFHILVTPLFL. Residues 593–1012 are Cytoplasmic-facing; that stretch reads LSSVVRSTVK…YLSSAGILLL (420 aa). An ABC transporter 1 domain is found at 679–929; it reads VQIMGGYFTW…ECQLFEHWKT (251 aa). Residues tryptophan 688, glycine 716, serine 720, and serine 721 each coordinate ATP. Position 720 (serine 720) interacts with Mg(2+). Position 774 (glutamine 774) interacts with Mg(2+). The span at 935-949 shows a compositional bias: basic and acidic residues; the sequence is DQELEKETVTERKAT. The interval 935-987 is disordered; it reads DQELEKETVTERKATEPPQGLSRAMSSRDGLLQDEEEEEEEAAESEEDDNLSS. The segment covering 966–984 has biased composition (acidic residues); sequence LQDEEEEEEEAAESEEDDN. Residues 1012-1306 enclose the ABC transmembrane type-1 2 domain; the sequence is LSLLVFSQLL…MVRNLADMEL (295 aa). Residues 1013 to 1030 form a helical membrane-spanning segment; sequence SLLVFSQLLKHMVLVAID. At 1031–1066 the chain is on the extracellular side; the sequence is YWLAKWTDSALTLTPAARNCSLSQECTLDQTVYAMV. Asparagine 1049 is a glycosylation site (N-linked (GlcNAc...) asparagine). The chain crosses the membrane as a helical span at residues 1067–1083; that stretch reads FTVLCSLGIVLCLVTSV. The Cytoplasmic segment spans residues 1084–1142; the sequence is TVEWTGLKVAKRLHRSLLNRIILAPMRFFETTPLGSILNRFSSDCNTIDQHIPSTLECL. Residues 1143–1160 form a helical membrane-spanning segment; that stretch reads SRSTLLCVSALAVISYVT. Proline 1161 is a topological domain (extracellular). A helical transmembrane segment spans residues 1162–1174; that stretch reads VFLVALLPLAIVC. Over 1175–1248 the chain is Cytoplasmic; sequence YFIQKYFRVA…FLTAANRWLE (74 aa). A helical transmembrane segment spans residues 1249 to 1264; sequence VRMEYIGACVVLIAAV. Over 1265 to 1280 the chain is Extracellular; that stretch reads TSISNSLHRELSAGLV. The helical transmembrane segment at 1281–1296 threads the bilayer; the sequence is GLGLTYALMVSNYLNW. The Cytoplasmic segment spans residues 1297 to 1581; sequence MVRNLADMEL…VFASFVRADK (285 aa). The region spanning 1344-1578 is the ABC transporter 2 domain; it reads IQIQNLSVRY…KDSVFASFVR (235 aa). Threonine 1380, glycine 1381, glycine 1383, lysine 1384, serine 1385, and serine 1386 together coordinate ADP. Serine 1482 provides a ligand contact to ATP.

The protein belongs to the ABC transporter superfamily. ABCC family. Conjugate transporter (TC 3.A.1.208) subfamily. Forms an heterooctamer with KCNJ11; four ABCC8/SUR1 molecules interact with one KCNJ11 homotetramer.

It localises to the cell membrane. Its activity is regulated as follows. KATP channels are regulated by cytoplasmic ATP/ADP ratios; ATP inhibits the channel by closing the pore, while ADP activates the channel. Activated by phosphatidylinositol 4,5-biphosphate (PtdIns(4,5)P2). Regulator subunit of pancreatic ATP-sensitive potassium channel (KATP), playing a major role in the regulation of insulin release. In pancreatic cells, it forms KATP channels with KCNJ11; KCNJ11 forms the channel pore while ABCC8 is required for activation and regulation. The protein is ATP-binding cassette sub-family C member 8 (ABCC8) of Homo sapiens (Human).